Here is an 825-residue protein sequence, read N- to C-terminus: Ubiquitin carboxyl-terminal hydrolase 16 (825 aa).

A disordered region spans residues 1-20; the sequence is MGKKRTKGRSAPDTVASESA. The segment at 22–141 adopts a UBP-type zinc-finger fold; that stretch reads PVCRHLRKGL…QVVDYVRKQA (120 aa). Zn(2+)-binding residues include Cys24, His26, Cys48, Cys51, Cys73, Cys76, Cys81, His89, His93, His102, Cys115, and Cys118. A Glycyl lysine isopeptide (Lys-Gly) (interchain with G-Cter in SUMO2) cross-link involves residue Lys139. Over residues 164-180 the composition is skewed to basic and acidic residues; sequence EKESKNEQEREKSENLA. A disordered region spans residues 164–184; the sequence is EKESKNEQEREKSENLAKETI. A Phosphoserine modification is found at Ser188. The 630-residue stretch at 195 to 824 folds into the USP domain; that stretch reads KGLSNLGNTC…QAYLLFYERI (630 aa). The Nucleophile role is filled by Cys204. Residues 393 to 407 show a composition bias toward basic and acidic residues; it reads SGKKSINDKNVKMTM. Residues 393–456 are disordered; that stretch reads SGKKSINDKN…KQAKNQRRQQ (64 aa). Acidic residues predominate over residues 408–419; sequence EEEDKDSEEEKD. Phosphoserine is present on Ser414. Residues 436–456 are compositionally biased toward basic residues; that stretch reads HLQKKAKKQAKKQAKNQRRQQ. Residues Ser520 and Ser531 each carry the phosphoserine modification. His759 (proton acceptor) is an active-site residue.

It belongs to the peptidase C19 family. USP16 subfamily. In terms of assembly, homotetramer. Associates with late pre-40S ribosomes. Interacts with CEP78; promoting deubiquitination of tektins. Post-translationally, phosphorylated at the onset of mitosis and dephosphorylated during the metaphase/anaphase transition. Phosphorylation by AURKB enhances the deubiquitinase activity.

It localises to the nucleus. It is found in the cytoplasm. The enzyme catalyses Thiol-dependent hydrolysis of ester, thioester, amide, peptide and isopeptide bonds formed by the C-terminal Gly of ubiquitin (a 76-residue protein attached to proteins as an intracellular targeting signal).. In terms of biological role, specifically deubiquitinates 'Lys-120' of histone H2A (H2AK119Ub), a specific tag for epigenetic transcriptional repression, thereby acting as a coactivator. Deubiquitination of histone H2A is a prerequisite for subsequent phosphorylation at 'Ser-11' of histone H3 (H3S10ph), and is required for chromosome segregation when cells enter into mitosis. In resting B- and T-lymphocytes, phosphorylation by AURKB leads to enhance its activity, thereby maintaining transcription in resting lymphocytes. Regulates Hox gene expression via histone H2A deubiquitination. Prefers nucleosomal substrates. Does not deubiquitinate histone H2B. Also deubiquitinates non-histone proteins, such as ribosomal protein RPS27A: deubiquitination of monoubiquitinated RPS27A promotes maturation of the 40S ribosomal subunit. Also mediates deubiquitination of tektin proteins (TEKT1, TEKT2, TEK3, TEKT4 and TEKT5), promoting their stability. This is Ubiquitin carboxyl-terminal hydrolase 16 (Usp16) from Mus musculus (Mouse).